Consider the following 252-residue polypeptide: Imidazole glycerol phosphate synthase subunit HisF (252 aa).

Active-site residues include Asp-11 and Asp-130.

This sequence belongs to the HisA/HisF family. Heterodimer of HisH and HisF.

Its subcellular location is the cytoplasm. The catalysed reaction is 5-[(5-phospho-1-deoxy-D-ribulos-1-ylimino)methylamino]-1-(5-phospho-beta-D-ribosyl)imidazole-4-carboxamide + L-glutamine = D-erythro-1-(imidazol-4-yl)glycerol 3-phosphate + 5-amino-1-(5-phospho-beta-D-ribosyl)imidazole-4-carboxamide + L-glutamate + H(+). The protein operates within amino-acid biosynthesis; L-histidine biosynthesis; L-histidine from 5-phospho-alpha-D-ribose 1-diphosphate: step 5/9. Its function is as follows. IGPS catalyzes the conversion of PRFAR and glutamine to IGP, AICAR and glutamate. The HisF subunit catalyzes the cyclization activity that produces IGP and AICAR from PRFAR using the ammonia provided by the HisH subunit. The polypeptide is Imidazole glycerol phosphate synthase subunit HisF (Azoarcus sp. (strain BH72)).